The chain runs to 585 residues: MSQMLHIEIPNFGNTVLGCLNEQRLLGLYCDVSIVVKGQAFKAHRAVLAASSLYFRDLFSGNSKSAFELPGTVPPACFQQILSFCYTGKLTMAASEQLVVMYTAGFLQIQHIVERGTDLMFKVSSPHCDSQTAMIEDASSEPQSPCNQLQPATAAYATSPSVPIPLLTRVKHEAMEMPPATGPGLASKRPLDTGPRDGVAVATGAAGTPGTAPLKLPRVSYYGVPSLATLIPSIQQVPYPQGERTSPGASSLPTTDSSTSYHNEDEDDDEAYDTMVEEQYGQMYIKATGNYAVQEKPEPVPLESRSCVLIRRDLVALPASLISQIGYRCHPKLYSEGDPGEKLELVAGSGVYITRGQLMNCHLCAGVKHKVLLRRLLATFFDRNTLANSCGTGIRSSTSDPSRKPLDSRVLNAVKLYCQNFAPSFKESEMNVIAADMCTNARRVRKRWLPKIKSMLPEGVEMYRSVMGASAASLPLDPEFPSAASQVFEQRIYAERRNDAATIVALRTDAVNVDLSTSANPAFEANEEVDGAGSVIQEVAAPEQLPADGQSSPQAFEQGNTSSSRPQTPVATATRRPEGTYAGTL.

The BTB domain maps to Cys30 to Ala94. Residues Lys171 and Lys215 each participate in a glycyl lysine isopeptide (Lys-Gly) (interchain with G-Cter in SUMO2) cross-link. Residues Pro238 to Tyr261 show a composition bias toward polar residues. The disordered stretch occupies residues Pro238–Asp269. Glycyl lysine isopeptide (Lys-Gly) (interchain with G-Cter in SUMO2) cross-links involve residues Lys296, Lys426, and Lys453. A BEN domain is found at Gly348–Arg445. Residues Ala541 to Leu585 are disordered. The span at Gly549–Ala571 shows a compositional bias: polar residues.

As to quaternary structure, homooligomer; mediated by the BTB domain. Interacts with the NuRD complex. Interacts (via C-terminal part) with HDAC2. Interacts (via BTB domain) with MTA1, MTA2 and MTA3.

Its subcellular location is the nucleus. In terms of biological role, functions as a transcriptional repressor through its association with the NuRD complex. Recruits the NuRD complex to the promoter of MDM2, leading to the repression of MDM2 transcription and subsequent stability of p53/TP53. This is Nucleus accumbens-associated protein 2 (Nacc2) from Rattus norvegicus (Rat).